Reading from the N-terminus, the 357-residue chain is 3-isopropylmalate dehydrogenase (357 aa).

Gly75–Glu88 contributes to the NAD(+) binding site. Positions 96, 106, 135, and 224 each coordinate substrate. Asp224, Asp248, and Asp252 together coordinate Mg(2+). Gly282 to Asn294 contributes to the NAD(+) binding site.

The protein belongs to the isocitrate and isopropylmalate dehydrogenases family. LeuB type 1 subfamily. As to quaternary structure, homodimer. The cofactor is Mg(2+). It depends on Mn(2+) as a cofactor.

It localises to the cytoplasm. It carries out the reaction (2R,3S)-3-isopropylmalate + NAD(+) = 4-methyl-2-oxopentanoate + CO2 + NADH. Its pathway is amino-acid biosynthesis; L-leucine biosynthesis; L-leucine from 3-methyl-2-oxobutanoate: step 3/4. Functionally, catalyzes the oxidation of 3-carboxy-2-hydroxy-4-methylpentanoate (3-isopropylmalate) to 3-carboxy-4-methyl-2-oxopentanoate. The product decarboxylates to 4-methyl-2 oxopentanoate. This is 3-isopropylmalate dehydrogenase from Desulfotalea psychrophila (strain LSv54 / DSM 12343).